A 611-amino-acid chain; its full sequence is Glutamine--fructose-6-phosphate aminotransferase [isomerizing] (611 aa).

Cys2 serves as the catalytic Nucleophile; for GATase activity. The region spanning Cys2–Asp219 is the Glutamine amidotransferase type-2 domain. SIS domains are found at residues Ala287–Arg427 and Val460–Pro601. Residue Lys606 is the For Fru-6P isomerization activity of the active site.

Homodimer.

The protein resides in the cytoplasm. The catalysed reaction is D-fructose 6-phosphate + L-glutamine = D-glucosamine 6-phosphate + L-glutamate. Functionally, catalyzes the first step in hexosamine metabolism, converting fructose-6P into glucosamine-6P using glutamine as a nitrogen source. The sequence is that of Glutamine--fructose-6-phosphate aminotransferase [isomerizing] from Pseudomonas aeruginosa (strain ATCC 15692 / DSM 22644 / CIP 104116 / JCM 14847 / LMG 12228 / 1C / PRS 101 / PAO1).